Reading from the N-terminus, the 1259-residue chain is Autism susceptibility gene 2 protein (1259 aa).

5 disordered regions span residues 1–87 (MDGP…EEDI), 108–285 (LKPQ…QDCC), 299–470 (CPQV…PPPP), 771–1027 (PNSM…MTVG), and 1119–1146 (REPH…HERG). Positions 8–17 (HGLRKKRRSR) are enriched in basic residues. Residues 28–41 (GGLGAGAAGGGGAG) show a composition bias toward gly residues. Residues 108 to 118 (LKPQERVEKRQ) show a composition bias toward basic and acidic residues. The segment covering 136–147 (HSKKSRLSHPHH) has biased composition (basic residues). A compositionally biased stretch (basic and acidic residues) spans 148–158 (YSSDRENDRNL). Polar residues predominate over residues 177–192 (PGQNSCRDSDSESASG). Basic and acidic residues predominate over residues 276–285 (RSQEKSQDCC). The important for regulation of lamellipodia formation stretch occupies residues 289-472 (IFEPVVLKDP…PTALPPPPPL (184 aa)). Composition is skewed to pro residues over residues 331 to 345 (PPQP…PQGP) and 353 to 365 (APQP…PRPQ). Residues 386–410 (SLSQPLSAYNSSSLSLNSLSSSRSS) show a composition bias toward low complexity. Polar residues predominate over residues 436–447 (PNHSPLHSFTPT). Residues 801 to 810 (PSFPTPPPWL) show a composition bias toward pro residues. 3 stretches are compositionally biased toward basic and acidic residues: residues 813 to 850 (GELE…VEKR), 876 to 935 (IRAH…EAKQ), and 960 to 993 (REAE…HDLP). A compositionally biased stretch (basic residues) spans 1125–1134 (SHHHHHHHHP). A phosphoserine mark is found at serine 1198 and serine 1233. The interval 1217 to 1259 (LSAPPPLISTLGGRPVSPRRTTPLSAEIRERPPSHTLKDIEAR) is disordered. A compositionally biased stretch (basic and acidic residues) spans 1243–1259 (EIRERPPSHTLKDIEAR).

The protein belongs to the AUTS2 family. In terms of assembly, component of a PRC1-like complex that contains PCGF5, RNF2, CSNK2B, RYBP and AUTS2. Within this complex, interacts directly with PCGF5 and CSNK2B. Interacts with the histone acetyltransferase EP300/p300. Interacts (via Pro-rich region) with PREX1, DOCK1 and ELMO2. In terms of tissue distribution, strongly expressed in brain, skeletal muscle and kidney. Also expressed in placenta, lung and leukocytes.

The protein localises to the nucleus. The protein resides in the cytoplasm. It is found in the cytoskeleton. Its subcellular location is the cell projection. It localises to the growth cone. Functionally, component of a Polycomb group (PcG) multiprotein PRC1-like complex, a complex class required to maintain the transcriptionally repressive state of many genes, including Hox genes, throughout development. PcG PRC1 complex acts via chromatin remodeling and modification of histones; it mediates monoubiquitination of histone H2A 'Lys-119', rendering chromatin heritably changed in its expressibility. The PRC1-like complex that contains PCGF5, RNF2, CSNK2B, RYBP and AUTS2 has decreased histone H2A ubiquitination activity, due to the phosphorylation of RNF2 by CSNK2B. As a consequence, the complex mediates transcriptional activation. In the cytoplasm, plays a role in axon and dendrite elongation and in neuronal migration during embryonic brain development. Promotes reorganization of the actin cytoskeleton, lamellipodia formation and neurite elongation via its interaction with RAC guanine nucleotide exchange factors, which then leads to the activation of RAC1. The sequence is that of Autism susceptibility gene 2 protein (AUTS2) from Homo sapiens (Human).